The following is a 380-amino-acid chain: Hydrogenase maturation factor HypD2 (380 aa).

Fe cation is bound by residues C36, C64, and C67.

Belongs to the HypD family. It depends on [4Fe-4S] cluster as a cofactor.

It functions in the pathway protein modification; [NiFe] hydrogenase maturation. Functionally, involved in the maturation of [NiFe] hydrogenases. Involved in the biosynthesis of the Fe(CN)(2)CO cofactor. This is Hydrogenase maturation factor HypD2 (hypD2) from Bradyrhizobium diazoefficiens (strain JCM 10833 / BCRC 13528 / IAM 13628 / NBRC 14792 / USDA 110).